The following is a 163-amino-acid chain: Neurotrophin-3 (163 aa).

Positions 1-3 (IQS) are cleaved as a signal peptide. Positions 4–119 (TSMDQGILTE…VLNRTSRRKR (116 aa)) are excised as a propeptide. N-linked (GlcNAc...) asparagine glycosylation is present at Asn112. Residues 113-133 (RTSRRKREGKSHRGEYSVCDS) form a disordered region. Residues 123–133 (SHRGEYSVCDS) show a composition bias toward basic and acidic residues.

The protein belongs to the NGF-beta family.

The protein resides in the secreted. Functionally, seems to promote the survival of visceral and proprioceptive sensory neurons. The sequence is that of Neurotrophin-3 (NTF3) from Charina bottae (Northern rubber boa).